The following is a 272-amino-acid chain: Type III pantothenate kinase (272 aa).

Residue 6 to 13 (DVRNTHTV) coordinates ATP. 109–112 (GADR) contacts substrate. Asp111 (proton acceptor) is an active-site residue. Asp131 is a K(+) binding site. Residue Ser134 participates in ATP binding. Thr186 is a binding site for substrate.

It belongs to the type III pantothenate kinase family. As to quaternary structure, homodimer. It depends on NH4(+) as a cofactor. The cofactor is K(+).

It localises to the cytoplasm. The enzyme catalyses (R)-pantothenate + ATP = (R)-4'-phosphopantothenate + ADP + H(+). It functions in the pathway cofactor biosynthesis; coenzyme A biosynthesis; CoA from (R)-pantothenate: step 1/5. In terms of biological role, catalyzes the phosphorylation of pantothenate (Pan), the first step in CoA biosynthesis. The chain is Type III pantothenate kinase from Mycobacterium marinum (strain ATCC BAA-535 / M).